The following is a 392-amino-acid chain: Basic salivary proline-rich protein 1 (392 aa).

The first 16 residues, 1–16, serve as a signal peptide directing secretion; that stretch reads MLLILLSVALLALSSA. Glutamine 17 carries the pyrrolidone carboxylic acid modification. The segment covering 19–28 has biased composition (polar residues); the sequence is LNEDVSQEES. The segment at 19-392 is disordered; that stretch reads LNEDVSQEES…QGGRPSRPPQ (374 aa). The segment covering 34–47 has biased composition (low complexity); that stretch reads GNPQGPSPQGGNKP. Residue serine 40 is modified to Phosphoserine; alternate. An O-linked (Hex) serine; alternate glycan is attached at serine 40. The span at 48–83 shows a compositional bias: pro residues; the sequence is QGPPPPPGKPQGPPPQGGNKPQGPPPPGKPQGPPPQ. Repeat copies occupy residues 53-72, 73-92, 93-112, 114-133, 134-153, 154-173, 175-194, 195-214, 215-234, 236-255, 256-275, 276-295, 297-316, 317-336, and 338-357. Positions 53–357 are 15 X 20 AA approximate tandem repeats of P-P-G-K-P-Q-G-P-P-[PAQ]-Q-[GE]-[GD]-[NKS]-[KSQRN]-[PRQS]-[QS] [GPS]-[PQAR]-[PSR]; that stretch reads PPGKPQGPPP…QEGNNPQGPP (305 aa). O-linked (HexNAc...) serine glycosylation occurs at serine 87. Residues 91 to 144 are compositionally biased toward pro residues; that stretch reads RSPPGKPQGPPPQGGNQPQGPPPPPGKPQGPPPQGGNKPQGPPPPGKPQGPPPQ. A Phosphoserine modification is found at serine 92. Serine 150 bears the Phosphoserine; alternate mark. O-linked (Hex) serine; alternate glycosylation occurs at serine 150. Composition is skewed to pro residues over residues 152–205, 213–243, 252–266, and 274–324; these read RSPP…PPPQ, RSPPGKPQGPPPQGGNQPQGPPPPPGKPQGP, QGPPPPGKPQGPPPQ, and QSPP…PQGP. Residues 325-334 are compositionally biased toward low complexity; sequence PAQGGSKSQS. Serine 330 carries O-linked (HexNAc...) serine glycosylation. Over residues 354-392 the composition is skewed to pro residues; it reads QGPPPPAGGNPQQPQAPPAGQPQGPPRPPQGGRPSRPPQ.

O-glycosylated. O-glycosylation on Ser-87 is prevalent in head and neck cancer patients. O-Glycosylation on Ser-330 has a 5 times prevalence in head and neck cancers. In terms of processing, proteolytically cleaved at the tripeptide Xaa-Pro-Gln, where Xaa in the P(3) position is mostly lysine. The endoprotease may be of microbial origin. Post-translationally, pyroglutamate formation occurs on terminal Gln residues of cleaved peptides. Besides on the N-terminal of mature PBR1, pyroglutamate formation found on at least Gln-58.

The protein localises to the secreted. The polypeptide is Basic salivary proline-rich protein 1 (PRB1) (Homo sapiens (Human)).